The chain runs to 303 residues: MAGLESAPAARPSLTSISSGELRSLWTCDCELALLPLGQLLRLQPGAFQLRGDQLVVPAPAEPASARGGFNVFGDGFVRLDGQLYRLSSYMRRYVELTNYCDYKDYRETILSKPMLFFVHVQTKKDSLKERTYAFLVNTRHPKIRRQIEQGMDMVISSVIGESYRLQFDFQEVVKNFFPPGNKVVNGEDLSFAYEFKADALFDFFYWFGLSNSTVKVNGKVLNLSSTSPEKKETIKLFLEKMSEPLIRRSSFSDRKFSVTSRGSIDEVFNCNLSPRSSLMEPLVAELPFPCVLESEETPNPFI.

The protein resides in the cytoplasm. Involved in processes that promote adipocyte differentiation, lipid accumulation, and glucose uptake in mature adipocytes. The protein is Mesenteric estrogen-dependent adipogenesis protein (MEDAG) of Bos taurus (Bovine).